The following is a 383-amino-acid chain: ATP phosphoribosyltransferase regulatory subunit (383 aa).

Belongs to the class-II aminoacyl-tRNA synthetase family. HisZ subfamily. Heteromultimer composed of HisG and HisZ subunits.

Its subcellular location is the cytoplasm. The protein operates within amino-acid biosynthesis; L-histidine biosynthesis; L-histidine from 5-phospho-alpha-D-ribose 1-diphosphate: step 1/9. Required for the first step of histidine biosynthesis. May allow the feedback regulation of ATP phosphoribosyltransferase activity by histidine. The sequence is that of ATP phosphoribosyltransferase regulatory subunit from Janthinobacterium sp. (strain Marseille) (Minibacterium massiliensis).